The chain runs to 417 residues: Envelope glycoprotein D (417 aa).

The first 18 residues, 1 to 18, serve as a signal peptide directing secretion; the sequence is MQGPTLAVLGALLAVAVS. The Virion surface segment spans residues 19 to 360; the sequence is LPTPAPRVTV…APATPAAPDA (342 aa). 2 N-linked (GlcNAc...) asparagine; by host glycosylation sites follow: Asn41 and Asn102. 3 disulfide bridges follow: Cys75–Cys197, Cys114–Cys213, and Cys126–Cys135. The segment at 259–356 is disordered; sequence EESKGYEPPP…HPPPAPATPA (98 aa). Residues 279–292 are compositionally biased toward acidic residues; sequence GDDEAREDEGETED. A helical membrane pass occupies residues 361 to 389; it reads VPVSVGIGIAAAAIACVAAAAAGAYFVYT. Residues 390–417 lie on the Intravirion side of the membrane; sequence RRRGAGPLPRKPKKLPAFGNVNYSALPG.

The protein belongs to the herpesviridae glycoprotein D family.

Its subcellular location is the virion membrane. Functionally, envelope glycoprotein that binds to host cell entry receptors, promoting the virus entry into host cells. May trigger fusion with host membrane, by recruiting the fusion machinery composed of gB and gH/gL. The protein is Envelope glycoprotein D (gD) of Bovine herpesvirus 1.1 (strain Cooper) (BoHV-1).